A 403-amino-acid chain; its full sequence is Argininosuccinate synthase (403 aa).

ATP-binding positions include 10 to 18 (AYSGGVDTS) and Ala38. An L-citrulline-binding site is contributed by Tyr89. Gly119 lines the ATP pocket. L-aspartate-binding residues include Thr121, Asn125, and Asp126. Residue Asn125 participates in L-citrulline binding. Residues Arg129, Ser177, Ser186, Glu262, and Tyr274 each contribute to the L-citrulline site.

It belongs to the argininosuccinate synthase family. Type 1 subfamily. Homotetramer.

It localises to the cytoplasm. The catalysed reaction is L-citrulline + L-aspartate + ATP = 2-(N(omega)-L-arginino)succinate + AMP + diphosphate + H(+). The protein operates within amino-acid biosynthesis; L-arginine biosynthesis; L-arginine from L-ornithine and carbamoyl phosphate: step 2/3. The sequence is that of Argininosuccinate synthase from Synechococcus sp. (strain CC9902).